We begin with the raw amino-acid sequence, 293 residues long: Small ribosomal subunit biogenesis GTPase RsgA (293 aa).

The 161-residue stretch at 63–223 folds into the CP-type G domain; sequence QNELVRPPVA…VADTPGFSAL (161 aa). GTP is bound by residues 112–115 and 166–174; these read SKID and GQSGVGKSS. Zn(2+) contacts are provided by Cys247, Cys252, His254, and Cys260.

Belongs to the TRAFAC class YlqF/YawG GTPase family. RsgA subfamily. In terms of assembly, monomer. Associates with 30S ribosomal subunit, binds 16S rRNA. The cofactor is Zn(2+).

It localises to the cytoplasm. Functionally, one of several proteins that assist in the late maturation steps of the functional core of the 30S ribosomal subunit. Helps release RbfA from mature subunits. May play a role in the assembly of ribosomal proteins into the subunit. Circularly permuted GTPase that catalyzes slow GTP hydrolysis, GTPase activity is stimulated by the 30S ribosomal subunit. The sequence is that of Small ribosomal subunit biogenesis GTPase RsgA from Geobacillus thermodenitrificans (strain NG80-2).